Consider the following 202-residue polypeptide: Osteoclast-stimulating factor 1 (202 aa).

The region spanning 12 to 71 (GQVKVFRALYTFEPRTPDELYFEEGDIIYISDMSDTNWWKGTCKGRTGLIPSNYVAEQAE) is the SH3 domain. 3 ANK repeats span residues 72-101 (SIDN…GVNG), 105-135 (AGNT…ELNQ), and 139-168 (LGDT…RTDL).

It is found in the cytoplasm. Induces bone resorption, acting probably through a signaling cascade which results in the secretion of factor(s) enhancing osteoclast formation and activity. This is Osteoclast-stimulating factor 1 (OSTF1) from Gallus gallus (Chicken).